A 377-amino-acid polypeptide reads, in one-letter code: Nitric oxide reductase FlRd-NAD(+) reductase (377 aa).

This sequence belongs to the FAD-dependent oxidoreductase family. It depends on FAD as a cofactor.

The protein localises to the cytoplasm. It carries out the reaction 2 reduced [nitric oxide reductase rubredoxin domain] + NAD(+) + H(+) = 2 oxidized [nitric oxide reductase rubredoxin domain] + NADH. The protein operates within nitrogen metabolism; nitric oxide reduction. Functionally, one of at least two accessory proteins for anaerobic nitric oxide (NO) reductase. Reduces the rubredoxin moiety of NO reductase. This Escherichia coli (strain SMS-3-5 / SECEC) protein is Nitric oxide reductase FlRd-NAD(+) reductase.